A 132-amino-acid chain; its full sequence is Acetylcholinesterase (132 aa).

N-linked (GlcNAc...) asparagine glycosylation is present at Asn37. A disulfide bridge links Cys45 with Cys72.

This sequence belongs to the type-B carboxylesterase/lipase family.

The protein localises to the synapse. It is found in the secreted. It localises to the cell membrane. It catalyses the reaction acetylcholine + H2O = choline + acetate + H(+). Functionally, rapidly hydrolyzes choline released into the synapse. The protein is Acetylcholinesterase (ACE-1) of Culex pipiens pipiens (Northern house mosquito).